A 365-amino-acid chain; its full sequence is MEGQSVEELLAKAKQEEAEKLQRITVHKELELEFDLGNLLASDRNPPTVLRQAGPSPEAELRALARDNTQLLVNQLWQLPTERVEEAVVARLPEPATRLPREKPLPRPRPLTRWQQFARLKGIRPKKKTNLVWDEVSGQWRRRWGYKRARDDTKEWLIEVPGSADPMEDQFAKRIRAKKERVAKNELNRLRNLARAHKMQMPSSAGLHPTGHQSKEELGRAMQVAKVSTASVGRFQERLPKEKAPRGSGKKRKFQPLFGDFAAEKKNQLELLRVMNSKKPQLDVTRATNKQMREEDQEEAAKRRKMSQKGKKKGGRQGPSGRRKGGPPSQGEKRKGVLGGKKHSRPPALGGKKKGVPHHGGKRRK.

Met1 is modified (N-acetylmethionine). Ser5 is subject to Phosphoserine. Glycyl lysine isopeptide (Lys-Gly) (interchain with G-Cter in SUMO2) cross-links involve residues Lys154 and Lys226. Positions 200-255 are disordered; that stretch reads QMPSSAGLHPTGHQSKEELGRAMQVAKVSTASVGRFQERLPKEKAPRGSGKKRKFQ. Positions 235–245 are enriched in basic and acidic residues; it reads FQERLPKEKAP. Residue Lys266 forms a Glycyl lysine isopeptide (Lys-Gly) (interchain with G-Cter in SUMO2) linkage. The disordered stretch occupies residues 272–365; that stretch reads LRVMNSKKPQ…VPHHGGKRRK (94 aa). Arg273 is modified (citrulline). Composition is skewed to basic residues over residues 302–325 and 340–365; these read KRRKMSQKGKKKGGRQGPSGRRKG and GKKHSRPPALGGKKKGVPHHGGKRRK.

It belongs to the RRS1 family. In terms of assembly, component of a hexameric 5S RNP precursor complex, composed of 5S RNA, RRS1, RPF2/BXDC1, RPL5, RPL11 and HEATR3; this complex acts as a precursor for ribosome assembly. In terms of processing, citrullinated by PADI4.

It is found in the nucleus. It localises to the nucleolus. Functionally, involved in ribosomal large subunit assembly. May regulate the localization of the 5S RNP/5S ribonucleoprotein particle to the nucleolus. In Rattus norvegicus (Rat), this protein is Ribosome biogenesis regulatory protein homolog (Rrs1).